Reading from the N-terminus, the 72-residue chain is DNA-directed RNA polymerase subunit omega (72 aa).

Belongs to the RNA polymerase subunit omega family. In terms of assembly, the RNAP catalytic core consists of 2 alpha, 1 beta, 1 beta' and 1 omega subunit. When a sigma factor is associated with the core the holoenzyme is formed, which can initiate transcription.

It catalyses the reaction RNA(n) + a ribonucleoside 5'-triphosphate = RNA(n+1) + diphosphate. Functionally, promotes RNA polymerase assembly. Latches the N- and C-terminal regions of the beta' subunit thereby facilitating its interaction with the beta and alpha subunits. The chain is DNA-directed RNA polymerase subunit omega from Laribacter hongkongensis (strain HLHK9).